The primary structure comprises 296 residues: Pyruvate synthase subunit PorB (296 aa).

The [4Fe-4S] cluster site is built by C17, C20, and C45. A compositionally biased stretch (polar residues) spans 140-150 (TPFDASTTTTP). Residues 140–159 (TPFDASTTTTPAGKVSFGNP) are disordered. C210 serves as a coordination point for [4Fe-4S] cluster.

Heterotetramer of one alpha, one beta, one delta and one gamma chain. [4Fe-4S] cluster is required as a cofactor.

The enzyme catalyses 2 oxidized [2Fe-2S]-[ferredoxin] + pyruvate + CoA = 2 reduced [2Fe-2S]-[ferredoxin] + acetyl-CoA + CO2 + H(+). The polypeptide is Pyruvate synthase subunit PorB (porB) (Methanosarcina barkeri (strain Fusaro / DSM 804)).